The sequence spans 309 residues: Methionyl-tRNA formyltransferase (309 aa).

110-113 provides a ligand contact to (6S)-5,6,7,8-tetrahydrofolate; the sequence is SLLP.

It belongs to the Fmt family.

The catalysed reaction is L-methionyl-tRNA(fMet) + (6R)-10-formyltetrahydrofolate = N-formyl-L-methionyl-tRNA(fMet) + (6S)-5,6,7,8-tetrahydrofolate + H(+). Functionally, attaches a formyl group to the free amino group of methionyl-tRNA(fMet). The formyl group appears to play a dual role in the initiator identity of N-formylmethionyl-tRNA by promoting its recognition by IF2 and preventing the misappropriation of this tRNA by the elongation apparatus. This is Methionyl-tRNA formyltransferase from Caldanaerobacter subterraneus subsp. tengcongensis (strain DSM 15242 / JCM 11007 / NBRC 100824 / MB4) (Thermoanaerobacter tengcongensis).